The following is a 237-amino-acid chain: MNKDYRPGQDTRPLFDRIAPRYDLLNRLLSFGIDRRWRLAAVRELALAGAGRILDAATGTGDVALSIAAAYPRAEVVGVDLSMNMLRAAVPKLLPAEGRITLLQASCESLPLAAETCDAAIIAFGIRNVLQRQVALQEFSRVLKPGGRLLVLEFSQPTNPLLAGLYRCYSRHVLPRIGGLISDGAAYRYLPDSVEAFPARGEFLGMMEQSGFRHVRHRDLTGGIVTLYSGCRSLPGD.

2 residues coordinate S-adenosyl-L-methionine: T60 and D80.

Belongs to the class I-like SAM-binding methyltransferase superfamily. MenG/UbiE family.

The enzyme catalyses a 2-demethylmenaquinol + S-adenosyl-L-methionine = a menaquinol + S-adenosyl-L-homocysteine + H(+). The catalysed reaction is a 2-methoxy-6-(all-trans-polyprenyl)benzene-1,4-diol + S-adenosyl-L-methionine = a 5-methoxy-2-methyl-3-(all-trans-polyprenyl)benzene-1,4-diol + S-adenosyl-L-homocysteine + H(+). Its pathway is quinol/quinone metabolism; menaquinone biosynthesis; menaquinol from 1,4-dihydroxy-2-naphthoate: step 2/2. It functions in the pathway cofactor biosynthesis; ubiquinone biosynthesis. Its function is as follows. Methyltransferase required for the conversion of demethylmenaquinol (DMKH2) to menaquinol (MKH2) and the conversion of 2-polyprenyl-6-methoxy-1,4-benzoquinol (DDMQH2) to 2-polyprenyl-3-methyl-6-methoxy-1,4-benzoquinol (DMQH2). This is Ubiquinone/menaquinone biosynthesis C-methyltransferase UbiE from Syntrophotalea carbinolica (strain DSM 2380 / NBRC 103641 / GraBd1) (Pelobacter carbinolicus).